A 382-amino-acid polypeptide reads, in one-letter code: Kelch domain-containing protein 3 (382 aa).

5 Kelch repeats span residues 25-77 (RVYS…PYMR), 88-138 (TVFL…VLGK), 139-189 (IMYI…TMLG), 191-249 (HMYV…GYNG), and 251-301 (LYIF…IVGD).

In terms of assembly, component of a CRL2(KLHDC3) complex, also named ECS(KLHDC3) complex, composed of CUL2, Elongin BC (ELOB and ELOC), RBX1 and substrate-specific adapter KLHDC3. May form oligomers as a KLHDC3-ELOB-ELOC complex; this interaction is likely autoinhibitory for the E3 ligase complex. In terms of tissue distribution, expressed specifically in testis, particularly in pachytene spermatocytes.

The protein resides in the cytoplasm. It functions in the pathway protein modification; protein ubiquitination. Substrate-recognition component of a Cul2-RING (CRL2) E3 ubiquitin-protein ligase complex of the DesCEND (destruction via C-end degrons) pathway, which recognizes a C-degron located at the extreme C terminus of target proteins, leading to their ubiquitination and degradation. The C-degron recognized by the DesCEND pathway is usually a motif of less than ten residues and can be present in full-length proteins, truncated proteins or proteolytically cleaved forms. The CRL2(KLHDC3) complex specifically recognizes proteins with a glycine (Gly) at the C-terminus, leading to their ubiquitination and degradation: recognizes the C-terminal -Arg-(Xaa)n-Arg-Gly, -Arg-(Xaa)n-Lys-Gly, and -Arg-(Xaa)n-Gln-Gly degrons. The CRL2(KLHDC3) complex mediates ubiquitination and degradation of truncated SELENOV and SEPHS2 selenoproteins produced by failed UGA/Sec decoding, which end with a glycine. May be involved in meiotic recombination process. This Mus musculus (Mouse) protein is Kelch domain-containing protein 3.